We begin with the raw amino-acid sequence, 101 residues long: Apolipoprotein C-II (101 aa).

Residues 1 to 22 form the signal peptide; sequence MGTRCLLVLLLVLLVLRCDVQG. A propeptide spans 23-28 (removed in mature form); that stretch reads DDMARQ. The tract at residues 66 to 74 is lipid binding; that stretch reads AVDEKIRDM. The interval 78–101 is lipoprotein lipase cofactor; sequence STAAVRIYTGILTDQILSMLSGDS.

This sequence belongs to the apolipoprotein C2 family. In terms of processing, proapolipoprotein C-II is synthesized as a sialic acid containing glycoprotein which is subsequently desialylated prior to its proteolytic processing. Proapolipoprotein C-II, the major form found in plasma undergoes proteolytic cleavage of its N-terminal hexapeptide to generate the mature form apolipoprotein C-II, which occurs as the minor form in plasma.

Its subcellular location is the secreted. In terms of biological role, component of chylomicrons, very low-density lipoproteins (VLDL), low-density lipoproteins (LDL), and high-density lipoproteins (HDL) in plasma. Plays an important role in lipoprotein metabolism as an activator of lipoprotein lipase, the enzyme which hydrolyzes the triacylglycerols on chylomicrons and VLDL. The polypeptide is Apolipoprotein C-II (APOC2) (Acinonyx jubatus (Cheetah)).